The primary structure comprises 565 residues: Proline--tRNA ligase (565 aa).

The protein belongs to the class-II aminoacyl-tRNA synthetase family. ProS type 1 subfamily. As to quaternary structure, homodimer.

The protein resides in the cytoplasm. The catalysed reaction is tRNA(Pro) + L-proline + ATP = L-prolyl-tRNA(Pro) + AMP + diphosphate. Catalyzes the attachment of proline to tRNA(Pro) in a two-step reaction: proline is first activated by ATP to form Pro-AMP and then transferred to the acceptor end of tRNA(Pro). As ProRS can inadvertently accommodate and process non-cognate amino acids such as alanine and cysteine, to avoid such errors it has two additional distinct editing activities against alanine. One activity is designated as 'pretransfer' editing and involves the tRNA(Pro)-independent hydrolysis of activated Ala-AMP. The other activity is designated 'posttransfer' editing and involves deacylation of mischarged Ala-tRNA(Pro). The misacylated Cys-tRNA(Pro) is not edited by ProRS. The polypeptide is Proline--tRNA ligase (Francisella philomiragia subsp. philomiragia (strain ATCC 25017 / CCUG 19701 / FSC 153 / O#319-036)).